Here is an 813-residue protein sequence, read N- to C-terminus: DNA gyrase subunit A (813 aa).

The Topo IIA-type catalytic domain occupies 38 to 504; sequence LPDVRDGLKP…EIEYLDVEDF (467 aa). Catalysis depends on Tyr-126, which acts as the O-(5'-phospho-DNA)-tyrosine intermediate. The GyrA-box motif lies at 531-537; that stretch reads QNRGGKG.

It belongs to the type II topoisomerase GyrA/ParC subunit family. Heterotetramer, composed of two GyrA and two GyrB chains. In the heterotetramer, GyrA contains the active site tyrosine that forms a transient covalent intermediate with DNA, while GyrB binds cofactors and catalyzes ATP hydrolysis.

It localises to the cytoplasm. It catalyses the reaction ATP-dependent breakage, passage and rejoining of double-stranded DNA.. In terms of biological role, a type II topoisomerase that negatively supercoils closed circular double-stranded (ds) DNA in an ATP-dependent manner to modulate DNA topology and maintain chromosomes in an underwound state. Negative supercoiling favors strand separation, and DNA replication, transcription, recombination and repair, all of which involve strand separation. Also able to catalyze the interconversion of other topological isomers of dsDNA rings, including catenanes and knotted rings. Type II topoisomerases break and join 2 DNA strands simultaneously in an ATP-dependent manner. This Treponema pallidum (strain Nichols) protein is DNA gyrase subunit A.